The chain runs to 695 residues: Elongation factor G (695 aa).

Residues 8–282 (EKTRNIGIMA…AVLDYLPAPT (275 aa)) enclose the tr-type G domain. Residues 17–24 (AHIDAGKT), 81–85 (DTPGH), and 135–138 (NKMD) contribute to the GTP site.

The protein belongs to the TRAFAC class translation factor GTPase superfamily. Classic translation factor GTPase family. EF-G/EF-2 subfamily.

The protein resides in the cytoplasm. Its function is as follows. Catalyzes the GTP-dependent ribosomal translocation step during translation elongation. During this step, the ribosome changes from the pre-translocational (PRE) to the post-translocational (POST) state as the newly formed A-site-bound peptidyl-tRNA and P-site-bound deacylated tRNA move to the P and E sites, respectively. Catalyzes the coordinated movement of the two tRNA molecules, the mRNA and conformational changes in the ribosome. This Listeria welshimeri serovar 6b (strain ATCC 35897 / DSM 20650 / CCUG 15529 / CIP 8149 / NCTC 11857 / SLCC 5334 / V8) protein is Elongation factor G.